Reading from the N-terminus, the 195-residue chain is Recombination protein RecR (195 aa).

A C4-type zinc finger spans residues 53–68 (CSVCFNIDVKSPCSIC). Residues 76-171 (QLLCIVEELG…KITRLACGIP (96 aa)) form the Toprim domain.

It belongs to the RecR family.

Functionally, may play a role in DNA repair. It seems to be involved in an RecBC-independent recombinational process of DNA repair. It may act with RecF and RecO. In Ehrlichia canis (strain Jake), this protein is Recombination protein RecR.